The primary structure comprises 436 residues: Mannitol-binding protein (436 aa).

An N-terminal signal peptide occupies residues 1–22 (MNDSIKACLAAACLALPLLAQG).

It belongs to the bacterial solute-binding protein 1 family.

The protein localises to the periplasm. Functionally, binds mannitol with high affinity. The polypeptide is Mannitol-binding protein (Pseudomonas aeruginosa (strain ATCC 15692 / DSM 22644 / CIP 104116 / JCM 14847 / LMG 12228 / 1C / PRS 101 / PAO1)).